Here is a 302-residue protein sequence, read N- to C-terminus: Ribosomal RNA small subunit methyltransferase H (302 aa).

S-adenosyl-L-methionine-binding positions include 34–36, D53, F80, D101, and Q108; that span reads AGH. The tract at residues 283-302 is disordered; sequence LEENPRSKSAKMRVLKKIER. Basic residues predominate over residues 290–302; that stretch reads KSAKMRVLKKIER.

The protein belongs to the methyltransferase superfamily. RsmH family.

The protein localises to the cytoplasm. It catalyses the reaction cytidine(1402) in 16S rRNA + S-adenosyl-L-methionine = N(4)-methylcytidine(1402) in 16S rRNA + S-adenosyl-L-homocysteine + H(+). Its function is as follows. Specifically methylates the N4 position of cytidine in position 1402 (C1402) of 16S rRNA. The sequence is that of Ribosomal RNA small subunit methyltransferase H from Mycoplasma mobile (strain ATCC 43663 / 163K / NCTC 11711) (Mesomycoplasma mobile).